The primary structure comprises 376 residues: Tetraacyldisaccharide 4'-kinase (376 aa).

51–58 (AVGGTGKT) contributes to the ATP binding site.

It belongs to the LpxK family.

The enzyme catalyses a lipid A disaccharide + ATP = a lipid IVA + ADP + H(+). It functions in the pathway glycolipid biosynthesis; lipid IV(A) biosynthesis; lipid IV(A) from (3R)-3-hydroxytetradecanoyl-[acyl-carrier-protein] and UDP-N-acetyl-alpha-D-glucosamine: step 6/6. In terms of biological role, transfers the gamma-phosphate of ATP to the 4'-position of a tetraacyldisaccharide 1-phosphate intermediate (termed DS-1-P) to form tetraacyldisaccharide 1,4'-bis-phosphate (lipid IVA). In Bacteroides fragilis (strain ATCC 25285 / DSM 2151 / CCUG 4856 / JCM 11019 / LMG 10263 / NCTC 9343 / Onslow / VPI 2553 / EN-2), this protein is Tetraacyldisaccharide 4'-kinase.